A 120-amino-acid polypeptide reads, in one-letter code: Large ribosomal subunit protein uL18 (120 aa).

The interval 1–22 (MKLTRRESKNRRHRRVRGKVVG) is disordered. Residues 8 to 18 (SKNRRHRRVRG) are compositionally biased toward basic residues.

It belongs to the universal ribosomal protein uL18 family. In terms of assembly, part of the 50S ribosomal subunit; part of the 5S rRNA/L5/L18/L25 subcomplex. Contacts the 5S and 23S rRNAs.

Functionally, this is one of the proteins that bind and probably mediate the attachment of the 5S RNA into the large ribosomal subunit, where it forms part of the central protuberance. The protein is Large ribosomal subunit protein uL18 of Nostoc punctiforme (strain ATCC 29133 / PCC 73102).